The chain runs to 59 residues: Photosystem II reaction center protein K (59 aa).

A propeptide spanning residues 1-22 is cleaved from the precursor; it reads MLNIFSLICLNSALHSSSFFFA. The chain crosses the membrane as a helical span at residues 38-58; the sequence is MPVIPVLFFLLALVWQAAVSF.

This sequence belongs to the PsbK family. As to quaternary structure, PSII is composed of 1 copy each of membrane proteins PsbA, PsbB, PsbC, PsbD, PsbE, PsbF, PsbH, PsbI, PsbJ, PsbK, PsbL, PsbM, PsbT, PsbX, PsbY, PsbZ, Psb30/Ycf12, at least 3 peripheral proteins of the oxygen-evolving complex and a large number of cofactors. It forms dimeric complexes.

It localises to the plastid. The protein localises to the chloroplast thylakoid membrane. One of the components of the core complex of photosystem II (PSII). PSII is a light-driven water:plastoquinone oxidoreductase that uses light energy to abstract electrons from H(2)O, generating O(2) and a proton gradient subsequently used for ATP formation. It consists of a core antenna complex that captures photons, and an electron transfer chain that converts photonic excitation into a charge separation. This Calycanthus floridus var. glaucus (Eastern sweetshrub) protein is Photosystem II reaction center protein K.